The primary structure comprises 384 residues: Secreted LysM effector Blys7 (384 aa).

A signal peptide spans 1-18; it reads MQRHLLLGLAGLPALLSA. A LysM 1 domain is found at 27–71; that stretch reads FATVAANGETCDSMAATWGLDTATFQSLNPKAKCPEVIGGEQYCV. Over residues 81–106 the composition is skewed to low complexity; it reads EPTTAPATTSTQTTTTTTTEVTSTTV. The disordered stretch occupies residues 81–112; the sequence is EPTTAPATTSTQTTTTTTTEVTSTTVPGNGIT. A LysM 2 domain is found at 127–173; the sequence is KFYFVNKGDNCADITARYNLDLSDFLEWNPKAGNSCSGLWANAYACV. The disordered stretch occupies residues 183–206; the sequence is KPKPTSTSTKPPTATGNGIPTPLP. Low complexity predominate over residues 186–195; sequence PTSTSTKPPT. In terms of domain architecture, LysM 3 spans 217–263; sequence KFYLVKPGETCADIASRNGVSLSDFLQWNPHAGNACSGLWANAYACL.

Belongs to the secreted LysM effector family.

Might have a role in sequestration of chitin oligosaccharides (breakdown products of fungal cell walls that are released during invasion and act as triggers of host immunity) to dampen host defense. In Beauveria bassiana (strain ARSEF 2860) (White muscardine disease fungus), this protein is Secreted LysM effector Blys7.